The chain runs to 296 residues: DNA repair protein complementing XP-A cells homolog (296 aa).

Over residues 1 to 10 (MSAEVSTNES) the composition is skewed to polar residues. The interval 1-39 (MSAEVSTNESAPPAEKKSKLTNAQKARIERNQAKAQKLR) is disordered. The segment covering 26–39 (ARIERNQAKAQKLR) has biased composition (basic and acidic residues). The Nuclear localization signal motif lies at 26-47 (ARIERNQAKAQKLREAKLVSHP). Positions 126, 129, 147, and 150 each coordinate Zn(2+). Residues 126-150 (CLECGDMFADSYLFNNFGHSVCDKC) fold into a zinc finger.

Belongs to the XPA family. Strongly expressed in the central nervous system and muscles.

The protein resides in the nucleus. In terms of biological role, involved in DNA excision repair. Initiates repair by binding to damaged sites with various affinities, depending on the photoproduct and the transcriptional state of the region. The sequence is that of DNA repair protein complementing XP-A cells homolog (Xpac) from Drosophila melanogaster (Fruit fly).